The chain runs to 176 residues: Transmembrane protein 238 (176 aa).

Residues 1–22 (MAAAPAVCASQGSPPGAPSAPA) form a disordered region. Over 1 to 36 (MAAAPAVCASQGSPPGAPSAPAAAPAPAAGLGRCRM) the chain is Cytoplasmic. A compositionally biased stretch (low complexity) spans 9–22 (ASQGSPPGAPSAPA). A helical membrane pass occupies residues 37–57 (ALLLAVALDVAGMAALLTGVF). Residues 58 to 69 (AQLQVRGRDFGD) lie on the Extracellular side of the membrane. The helical transmembrane segment at 70-90 (LLIYSGALLVFLSLLGWILWY) threads the bilayer. At 91–176 (TGNIEISRQE…GPGAAGAGSE (86 aa)) the chain is on the cytoplasmic side. Residues 124 to 137 (SAPAAAGQRPAPGS) are compositionally biased toward low complexity. Residues 124 to 157 (SAPAAAGQRPAPGSRRARRAARAPPPPAAGSRRV) are disordered. At S175 the chain carries Phosphoserine.

It localises to the membrane. The sequence is that of Transmembrane protein 238 (TMEM238) from Homo sapiens (Human).